The primary structure comprises 64 residues: uncharacterized protein (64 aa).

The N-terminal stretch at 1–26 is a signal peptide; the sequence is MVVKENFCGACLTIPLAFAGAGTAIG. A helical membrane pass occupies residues 33 to 53; sequence IKKWSIVITIISLLLTVWFIY.

This sequence belongs to the IIV-6 010R family.

The protein localises to the host membrane. This is an uncharacterized protein from Aedes vexans (Inland floodwater mosquito).